A 1192-amino-acid polypeptide reads, in one-letter code: Protein FAM83H (1192 aa).

5 disordered regions span residues 435-542 (EGMG…VKQG), 557-661 (DGGE…LAEP), 695-720 (SKLE…ESEP), 737-1082 (LSRE…SNII), and 1094-1145 (ILEQ…ERDN). The span at 437 to 447 (MGHDDRGHYDR) shows a compositional bias: basic and acidic residues. 2 stretches are compositionally biased toward polar residues: residues 523 to 538 (QLFS…QDPS) and 629 to 652 (SDLG…ASST). Composition is skewed to basic and acidic residues over residues 737-759 (LSRE…KHAS) and 768-789 (DTKE…EENK). Residues 790 to 810 (VTQPTVPSASQQITSSLNMND) are compositionally biased toward polar residues. The span at 820–834 (DQQEKRKTSKLELDL) shows a compositional bias: basic and acidic residues. Positions 861-878 (TSEQSTVKAQEPTVSQTD) are enriched in polar residues. Basic and acidic residues-rich tracts occupy residues 880-892 (VPHR…KPKP) and 914-925 (APKKEPVKEPTK). The span at 926-946 (SLKPFPSPKFLKPFKSSQSSS) shows a compositional bias: low complexity. Residues 994 to 1005 (ESKDTKALDFLK) show a composition bias toward basic and acidic residues. A compositionally biased stretch (polar residues) spans 1068-1082 (KPTTSRYQSSTSNII). Positions 1107 to 1122 (QQNEESGKGDGGKDDV) are enriched in basic and acidic residues.

The protein belongs to the FAM83 family.

The protein localises to the cytoplasm. It is found in the cytoskeleton. In terms of biological role, may play a role in keratin cytoskeleton disassembly. The protein is Protein FAM83H of Danio rerio (Zebrafish).